Consider the following 102-residue polypeptide: Small ribosomal subunit protein uS10 (102 aa).

Belongs to the universal ribosomal protein uS10 family. Part of the 30S ribosomal subunit.

In terms of biological role, involved in the binding of tRNA to the ribosomes. This is Small ribosomal subunit protein uS10 from Rhodopseudomonas palustris (strain HaA2).